The primary structure comprises 381 residues: Cytochrome b (381 aa).

A run of 4 helical transmembrane segments spans residues 34-54 (FGSLLGLCLIIQILTGLFLAM), 78-99 (WLIRNIHANGASLFFICIYLHI), 114-134 (WNIGVILLFLLMATAFVGYVL), and 179-199 (FFAFHFLLPFLILALTVIHLL). Heme b contacts are provided by His84 and His98. Residues His183 and His197 each coordinate heme b. His202 lines the a ubiquinone pocket. A run of 4 helical transmembrane segments spans residues 227–247 (YKDLLGFFIMIFFLATLALFM), 289–309 (LGGVLALLFSIFILMLVPLLH), 321–341 (MTQIFFWLLVANFLILTWIGG), and 348–368 (FMMVGQIASISYFALFLIIMP).

This sequence belongs to the cytochrome b family. In terms of assembly, the cytochrome bc1 complex contains 3 respiratory subunits (MT-CYB, CYC1 and UQCRFS1), 2 core proteins (UQCRC1 and UQCRC2) and probably 6 low-molecular weight proteins. It depends on heme b as a cofactor.

The protein resides in the mitochondrion inner membrane. Its function is as follows. Component of the ubiquinol-cytochrome c reductase complex (complex III or cytochrome b-c1 complex) that is part of the mitochondrial respiratory chain. The b-c1 complex mediates electron transfer from ubiquinol to cytochrome c. Contributes to the generation of a proton gradient across the mitochondrial membrane that is then used for ATP synthesis. The sequence is that of Cytochrome b (mt-cyb) from Prionace glauca (Blue shark).